We begin with the raw amino-acid sequence, 201 residues long: dTTP/UTP pyrophosphatase (201 aa).

D80 acts as the Proton acceptor in catalysis.

It belongs to the Maf family. YhdE subfamily. The cofactor is a divalent metal cation.

The protein localises to the cytoplasm. It carries out the reaction dTTP + H2O = dTMP + diphosphate + H(+). The catalysed reaction is UTP + H2O = UMP + diphosphate + H(+). Its function is as follows. Nucleoside triphosphate pyrophosphatase that hydrolyzes dTTP and UTP. May have a dual role in cell division arrest and in preventing the incorporation of modified nucleotides into cellular nucleic acids. In Novosphingobium aromaticivorans (strain ATCC 700278 / DSM 12444 / CCUG 56034 / CIP 105152 / NBRC 16084 / F199), this protein is dTTP/UTP pyrophosphatase.